Consider the following 292-residue polypeptide: Protoheme IX farnesyltransferase (292 aa).

The next 9 membrane-spanning stretches (helical) occupy residues 13–33, 35–55, 84–104, 106–126, 135–155, 161–181, 206–226, 231–251, and 263–283; these read ILFG…QGSI, ILLL…GCVV, VALV…WFGV, GYAF…YSLW, TVIG…AVTH, ALLL…AIAI, IECV…YCFG, FFLI…IIGF, and FFLY…FTYQ.

It belongs to the UbiA prenyltransferase family. Protoheme IX farnesyltransferase subfamily.

It is found in the cell inner membrane. It carries out the reaction heme b + (2E,6E)-farnesyl diphosphate + H2O = Fe(II)-heme o + diphosphate. It functions in the pathway porphyrin-containing compound metabolism; heme O biosynthesis; heme O from protoheme: step 1/1. In terms of biological role, converts heme B (protoheme IX) to heme O by substitution of the vinyl group on carbon 2 of heme B porphyrin ring with a hydroxyethyl farnesyl side group. The sequence is that of Protoheme IX farnesyltransferase from Acinetobacter baumannii (strain AB307-0294).